The chain runs to 153 residues: Putative nuclear shuttle protein (153 aa).

It belongs to the nanoviridae nuclear shuttle protein family.

It is found in the host nucleus. The protein localises to the host cytoplasm. In terms of biological role, putative nuclear shuttle protein. The polypeptide is Putative nuclear shuttle protein (DNA-N) (Faba bean necrotic yellows virus (isolate Syrian SV292-88) (FBNYV)).